Consider the following 216-residue polypeptide: MOB kinase activator 3C (216 aa).

Residues Cys-82, Cys-87, His-164, and His-169 each coordinate Zn(2+).

This sequence belongs to the MOB1/phocein family.

Its function is as follows. May regulate the activity of kinases. This chain is MOB kinase activator 3C (MOB3C), found in Homo sapiens (Human).